The sequence spans 331 residues: Protein RecA (331 aa).

Residue 67-74 (GPESSGKT) coordinates ATP.

Belongs to the RecA family.

The protein resides in the cytoplasm. Can catalyze the hydrolysis of ATP in the presence of single-stranded DNA, the ATP-dependent uptake of single-stranded DNA by duplex DNA, and the ATP-dependent hybridization of homologous single-stranded DNAs. It interacts with LexA causing its activation and leading to its autocatalytic cleavage. In Wigglesworthia glossinidia brevipalpis, this protein is Protein RecA.